The chain runs to 130 residues: MSKRTEQLGHEIQRILGEILQYELKDPRVGFATVVGVEVTADLQIARVRISVMGTPEERKETMAALERAKGFLRRRLAEELNYLRFVPELRLILDTSVDYSLHIDELLRRAAAERAGSPPPQPEDDKPAE.

Belongs to the RbfA family. Monomer. Binds 30S ribosomal subunits, but not 50S ribosomal subunits or 70S ribosomes.

Its subcellular location is the cytoplasm. Functionally, one of several proteins that assist in the late maturation steps of the functional core of the 30S ribosomal subunit. Associates with free 30S ribosomal subunits (but not with 30S subunits that are part of 70S ribosomes or polysomes). Required for efficient processing of 16S rRNA. May interact with the 5'-terminal helix region of 16S rRNA. The polypeptide is Ribosome-binding factor A (Roseiflexus castenholzii (strain DSM 13941 / HLO8)).